A 361-amino-acid polypeptide reads, in one-letter code: Peptide chain release factor 1 (361 aa).

Q237 is modified (N5-methylglutamine). Over residues 285–296 (DEKRRSAEESTR) the composition is skewed to basic and acidic residues. The segment at 285–305 (DEKRRSAEESTRRNLVSSGDR) is disordered.

Belongs to the prokaryotic/mitochondrial release factor family. In terms of processing, methylated by PrmC. Methylation increases the termination efficiency of RF1.

It is found in the cytoplasm. Functionally, peptide chain release factor 1 directs the termination of translation in response to the peptide chain termination codons UAG and UAA. In Shewanella halifaxensis (strain HAW-EB4), this protein is Peptide chain release factor 1.